Reading from the N-terminus, the 427-residue chain is Enolase (427 aa).

Residue glutamine 162 participates in (2R)-2-phosphoglycerate binding. Catalysis depends on glutamate 206, which acts as the Proton donor. Mg(2+)-binding residues include aspartate 243, glutamate 286, and aspartate 313. Residues lysine 338, arginine 367, serine 368, and lysine 389 each contribute to the (2R)-2-phosphoglycerate site. The active-site Proton acceptor is lysine 338.

The protein belongs to the enolase family. Requires Mg(2+) as cofactor.

The protein localises to the cytoplasm. It localises to the secreted. It is found in the cell surface. It catalyses the reaction (2R)-2-phosphoglycerate = phosphoenolpyruvate + H2O. It functions in the pathway carbohydrate degradation; glycolysis; pyruvate from D-glyceraldehyde 3-phosphate: step 4/5. Functionally, catalyzes the reversible conversion of 2-phosphoglycerate (2-PG) into phosphoenolpyruvate (PEP). It is essential for the degradation of carbohydrates via glycolysis. In Methanopyrus kandleri (strain AV19 / DSM 6324 / JCM 9639 / NBRC 100938), this protein is Enolase.